A 497-amino-acid polypeptide reads, in one-letter code: Lysine--tRNA ligase (497 aa).

Residues glutamate 405 and glutamate 412 each contribute to the Mg(2+) site.

The protein belongs to the class-II aminoacyl-tRNA synthetase family. As to quaternary structure, homodimer. The cofactor is Mg(2+).

It localises to the cytoplasm. It catalyses the reaction tRNA(Lys) + L-lysine + ATP = L-lysyl-tRNA(Lys) + AMP + diphosphate. This chain is Lysine--tRNA ligase, found in Gloeobacter violaceus (strain ATCC 29082 / PCC 7421).